The following is an 859-amino-acid chain: MQEQYNPSEIEALVQKHWHDNKTFEVTEDANKEKFYCLSMFPYPSGRLHMGHVRNYTIGDVVARFQRLQGKNVLQPIGWDSFGLPAENAAINNKTAPAPWTYENIEYMKNQLKLLGFGYDWSREIATCTPEYYRWEQWFFTKLYEKGLVYKKTASVNWCPNDETVLANEQVQDGCCWRCDTPVEQKEIPQWFIKITAYAEELLNDIDTLDGWPEQVKTMQRNWIGRSEGVEMTFGVAGHDKTFDIYTTRPDTLMGVTYVAIAAGHPLAEIAAQTNPELAAFIDECKNSTTSEAELATMEKRGVATGLFAIHPITGKQVPIWAANFVLMNYGTGAVMSVPGHDQRDFEFAKKYGLAIEAVIKPVDGEVDISEAAYTEKGILFNSGEFDGLDFDAAFNAIANKLVAEGKGKRQVNYRLRDWGVSRQRYWGAPIPMVTLADGTVIPTPEDQLPVLLPEDVVMDGIQSPIKADKEWAKTQVNGQDALRETDTFDTFMESSWYYARYCSPQADEMLDPAKANYWLPVDQYIGGIEHACMHLLYFRFFHKLLRDAGLVNSNEPAKQLLTQGMVLADAFYYINEKGARVWVSPLDVATTEKDDKGRITKAIDKDGNELVYTGMCKMSKSKNNGIDPQVMVEKYGADTVRLFMMFASPPELTLEWQESGVEGAHRFIKRLWKLASEYIAQDNSEALDVSKLTSEQKALRREVHKTIAKVTDDIGRRQMFNTAVAAVMELMNHLQKAPQTTGQDRAIIGEALSAVVRLLYPIIPHVSFTLWNDLGNTGSIEDSQWPVVDESALVEDSKLIVVQVNGKVRAKITVAADADKDSVEALGMNDEHVIKYLDGLTVRKVIYVPGKLLSIVAN.

The 'HIGH' region signature appears at 42–52 (PYPSGRLHMGH). Residues 618 to 622 (KMSKS) carry the 'KMSKS' region motif. K621 contacts ATP.

This sequence belongs to the class-I aminoacyl-tRNA synthetase family.

It is found in the cytoplasm. The catalysed reaction is tRNA(Leu) + L-leucine + ATP = L-leucyl-tRNA(Leu) + AMP + diphosphate. The polypeptide is Leucine--tRNA ligase (Shewanella sp. (strain W3-18-1)).